The sequence spans 2812 residues: Polyunsaturated fatty acid synthase subunit A (2812 aa).

One can recognise a Ketosynthase family 3 (KS3) domain in the interval 12-472; the sequence is DTRIAVIGMS…GANYHAVLEE (461 aa). Active-site for beta-ketoacyl synthase activity residues include cysteine 213, histidine 348, and histidine 390. The Malonyl-CoA:ACP transacylase (MAT) domain maps to 602-913; sequence LFSGQGAQYT…TVSVNPASGK (312 aa). Residues 1000-1048 are a coiled coil; the sequence is DEEAKREAARLQKQLEDAQRQLDEAKRAADEANQKLAAAKEEAKSAAAS. Carrier domains are found at residues 1114–1193, 1232–1308, and 1342–1418; these read ALLA…KAEI, ERAE…KAEI, and AKAE…KAEI. O-(pantetheine 4'-phosphoryl)serine is present on residues serine 1152, serine 1267, and serine 1377. The interval 1422–1442 is disordered; it reads SAPAPAAAAPAPAAPAPAAAA. The segment covering 1423 to 1442 has biased composition (low complexity); it reads APAPAAAAPAPAAPAPAAAA. One can recognise a Carrier 4 domain in the interval 1455–1531; it reads AKAETVVMEV…EVVDAMKAEI (77 aa). The residue at position 1490 (serine 1490) is an O-(pantetheine 4'-phosphoryl)serine. The tract at residues 1535–1555 is disordered; that stretch reads SAPAPAAAAPAPAAPAPAAAA. The span at 1536-1555 shows a compositional bias: low complexity; sequence APAPAAAAPAPAAPAPAAAA. Carrier domains lie at 1568–1644, 1681–1757, 1792–1868, and 1903–1979; these read AKAE…KAEI. O-(pantetheine 4'-phosphoryl)serine occurs at positions 1603, 1716, 1827, and 1938. The Ketoreductase (KR) domain maps to 2257–2484; that stretch reads VVSGGARGIT…VKSICFGPWD (228 aa). Residues 2524–2651 form an N-terminal hotdog fold region; the sequence is EILVGNWRTP…RAVVVLSSQG (128 aa). The 289-residue stretch at 2524-2812 folds into the PKS/mFAS DH domain; it reads EILVGNWRTP…SVIATDSLAF (289 aa). Residues 2540-2800 form a dehydratase (DH) domain region; the sequence is ETITLHRKIS…NEQGDLFIDV (261 aa). Histidine 2559 serves as the catalytic Proton acceptor; for dehydratase activity. The interval 2666-2812 is C-terminal hotdog fold; the sequence is ADPAAQSAVY…SVIATDSLAF (147 aa). Aspartate 2730 serves as the catalytic Proton donor; for dehydratase activity.

As to quaternary structure, component of the polyunsaturated fatty acid synthase complex composed of at least ORF-A, ORF-B and ORF-C. Pantetheine 4'-phosphate serves as cofactor.

The protein operates within lipid metabolism; fatty acid biosynthesis. Functionally, poliketide synthase-like protein; part of the polyunsaturated fatty acid synthase composed of the 3 PKS-like subunits A, B and C. While the saturated fatty acids (SFAs) in Thraustochytrium are produced by the conventional fatty acid synthase (FAS) pathway, polyunsaturated fatty acids (PUFAs) including docosahexeanoic acid (DHA) and docosapentaenoic acid (DPA) are synthesized via an anaerobical PKS pathway. PUFA synthase assimilates fatty acyl-CoA, the product of FAS, as the starter unit to synthesize DPA, and this starter unit may be butyryl-CoA, hexanoyl-CoA, or octanoyl-CoA. DPA and DHA biosynthesis seem to differ by the reduction at the N-3 position by PUFA synthase, not the extension of carbon chain. In DHA biosynthesis, PUFA synthase extends the fatty acyl chain from the methyl toward the carboxyl end, and the double bond is formed when the carbon chain is growing, instead of afterward. Therefore, PUFA synthase is unable to transform DPA to DHA, suggesting that DPA is not the precursor of DHA. Moreover, DPA molecule is partly extended by FAS KS domain, so DPA biosynthesis is less dependent on PUFA synthase KS domain than DHA. The polypeptide is Polyunsaturated fatty acid synthase subunit A (Thraustochytrium sp. (strain ATCC 26185 / S-3)).